A 97-amino-acid polypeptide reads, in one-letter code: Late transcription unit B protein (97 aa).

In Chlamydia muridarum (strain MoPn / Nigg), this protein is Late transcription unit B protein (ltuB).